The following is a 384-amino-acid chain: 4-hydroxy-3-methylbut-2-en-1-yl diphosphate synthase (flavodoxin) (384 aa).

The [4Fe-4S] cluster site is built by cysteine 280, cysteine 283, cysteine 315, and glutamate 322.

Belongs to the IspG family. [4Fe-4S] cluster is required as a cofactor.

It catalyses the reaction (2E)-4-hydroxy-3-methylbut-2-enyl diphosphate + oxidized [flavodoxin] + H2O + 2 H(+) = 2-C-methyl-D-erythritol 2,4-cyclic diphosphate + reduced [flavodoxin]. It participates in isoprenoid biosynthesis; isopentenyl diphosphate biosynthesis via DXP pathway; isopentenyl diphosphate from 1-deoxy-D-xylulose 5-phosphate: step 5/6. Its function is as follows. Converts 2C-methyl-D-erythritol 2,4-cyclodiphosphate (ME-2,4cPP) into 1-hydroxy-2-methyl-2-(E)-butenyl 4-diphosphate. In Frankia alni (strain DSM 45986 / CECT 9034 / ACN14a), this protein is 4-hydroxy-3-methylbut-2-en-1-yl diphosphate synthase (flavodoxin).